The following is a 188-amino-acid chain: MATVSTNEFKGGLKLMIDSEPCVILENEYVKPGKGQAFNRVKIRKLLSGKVLEKTFKSGDTCEVADVMDIDLDYLYSDGEFYHFMNNETFEQIAADAKAVGENVKWLVENNTCMLTLWNGNPIAVTPPNFVELEVIETDPGLKGDTQGTGGKPATLSTGAVVRVPLFIQIGEVIKVDTRSSEYVGRVK.

Lys-34 carries the N6-(3,6-diaminohexanoyl)-5-hydroxylysine modification.

Belongs to the elongation factor P family. In terms of processing, may be beta-lysylated on the epsilon-amino group of Lys-34 by the combined action of EpmA and EpmB, and then hydroxylated on the C5 position of the same residue by EpmC (if this protein is present). Lysylation is critical for the stimulatory effect of EF-P on peptide-bond formation. The lysylation moiety may extend toward the peptidyltransferase center and stabilize the terminal 3-CCA end of the tRNA. Hydroxylation of the C5 position on Lys-34 may allow additional potential stabilizing hydrogen-bond interactions with the P-tRNA.

The protein resides in the cytoplasm. The protein operates within protein biosynthesis; polypeptide chain elongation. In terms of biological role, involved in peptide bond synthesis. Alleviates ribosome stalling that occurs when 3 or more consecutive Pro residues or the sequence PPG is present in a protein, possibly by augmenting the peptidyl transferase activity of the ribosome. Modification of Lys-34 is required for alleviation. This chain is Elongation factor P, found in Vibrio vulnificus (strain CMCP6).